We begin with the raw amino-acid sequence, 403 residues long: Tryptophan 2,3-dioxygenase (403 aa).

69–73 contacts substrate; sequence FIVIH. A PLD motif; required for enzymatic activity motif is present at residues 133 to 135; it reads PLD. R140 contacts substrate. H327 provides a ligand contact to heme. Residue T341 participates in substrate binding.

It belongs to the tryptophan 2,3-dioxygenase family. As to quaternary structure, homotetramer. Dimer of dimers. Heme serves as cofactor. Expressed in body wall muscle cells, hypodermis, PLM neurons and touch-receptor neurons.

The catalysed reaction is L-tryptophan + O2 = N-formyl-L-kynurenine. It participates in amino-acid degradation; L-tryptophan degradation via kynurenine pathway; L-kynurenine from L-tryptophan: step 1/2. Its function is as follows. Heme-dependent dioxygenase that catalyzes the oxidative cleavage of the L-tryptophan (L-Trp) pyrrole ring and converts L-tryptophan to N-formyl-L-kynurenine. Catalyzes the oxidative cleavage of the indole moiety. Involved in regulation of protein homeostasis, longevity and reproducive life span. Specifically regulates proteotoxicity due to age-related aggregation of proteins like alpha-synuclein, via its effects on tryptophan metabolism. This Caenorhabditis elegans protein is Tryptophan 2,3-dioxygenase.